Reading from the N-terminus, the 281-residue chain is Ethylene-inducing xylanase 1 (281 aa).

A signal peptide spans 1-19 (MVSYKAFLITLAAVTRVLT). Residue Asn-23 is glycosylated (N-linked (GlcNAc...) asparagine). One can recognise a GH11 domain in the interval 32–220 (SGTPSSTGTS…SSGSSDITVG (189 aa)). The active-site Nucleophile is the Glu-116. The Proton donor role is filled by Glu-207. The CBM1 domain maps to 246-281 (TCGALYSQCGGTGFTGSQCCASGTCKYANSYYSQCL).

Belongs to the glycosyl hydrolase 11 (cellulase G) family.

It carries out the reaction Endohydrolysis of (1-&gt;4)-beta-D-xylosidic linkages in xylans.. It participates in glycan degradation; xylan degradation. In terms of biological role, endo-1,4-beta-xylanase involved in the hydrolysis of xylan, a major structural heterogeneous polysaccharide found in plant biomass representing the second most abundant polysaccharide in the biosphere, after cellulose. May act as an elicitor of plant defense responses in certain plants but does not exhibit any cell death when transiently expressed in N.benthamiana. In Botryotinia fuckeliana (strain B05.10) (Noble rot fungus), this protein is Ethylene-inducing xylanase 1.